Here is a 513-residue protein sequence, read N- to C-terminus: ATP synthase subunit alpha (513 aa).

Residue 169–176 participates in ATP binding; it reads GDRQTGKT.

This sequence belongs to the ATPase alpha/beta chains family. F-type ATPases have 2 components, CF(1) - the catalytic core - and CF(0) - the membrane proton channel. CF(1) has five subunits: alpha(3), beta(3), gamma(1), delta(1), epsilon(1). CF(0) has three main subunits: a(1), b(2) and c(9-12). The alpha and beta chains form an alternating ring which encloses part of the gamma chain. CF(1) is attached to CF(0) by a central stalk formed by the gamma and epsilon chains, while a peripheral stalk is formed by the delta and b chains.

The protein resides in the cell inner membrane. It catalyses the reaction ATP + H2O + 4 H(+)(in) = ADP + phosphate + 5 H(+)(out). Functionally, produces ATP from ADP in the presence of a proton gradient across the membrane. The alpha chain is a regulatory subunit. In Bordetella pertussis (strain Tohama I / ATCC BAA-589 / NCTC 13251), this protein is ATP synthase subunit alpha.